A 121-amino-acid chain; its full sequence is uncharacterized protein (121 aa).

This sequence to M.jannaschii MJ0017 and MJ1466.

This is an uncharacterized protein from Aquifex aeolicus (strain VF5).